Reading from the N-terminus, the 60-residue chain is Large ribosomal subunit protein uL30 (60 aa).

Belongs to the universal ribosomal protein uL30 family. As to quaternary structure, part of the 50S ribosomal subunit.

This Moorella thermoacetica (strain ATCC 39073 / JCM 9320) protein is Large ribosomal subunit protein uL30.